A 227-amino-acid chain; its full sequence is Cytidylate kinase (227 aa).

An ATP-binding site is contributed by 12–20 (GPSGAGKGT).

This sequence belongs to the cytidylate kinase family. Type 1 subfamily.

The protein resides in the cytoplasm. It catalyses the reaction CMP + ATP = CDP + ADP. The enzyme catalyses dCMP + ATP = dCDP + ADP. This is Cytidylate kinase from Salmonella choleraesuis (strain SC-B67).